Consider the following 316-residue polypeptide: DNA-directed RNA polymerase subunit alpha (316 aa).

The alpha N-terminal domain (alpha-NTD) stretch occupies residues 1 to 232 (MSGNDLFPST…DLFNPLHHCS (232 aa)). The segment at 247–316 (KINDILVEEL…LNIYLPKEKY (70 aa)) is alpha C-terminal domain (alpha-CTD).

This sequence belongs to the RNA polymerase alpha chain family. In plastids the minimal PEP RNA polymerase catalytic core is composed of four subunits: alpha, beta, beta', and beta''. When a (nuclear-encoded) sigma factor is associated with the core the holoenzyme is formed, which can initiate transcription.

Its subcellular location is the plastid. It is found in the chloroplast. It carries out the reaction RNA(n) + a ribonucleoside 5'-triphosphate = RNA(n+1) + diphosphate. Functionally, DNA-dependent RNA polymerase catalyzes the transcription of DNA into RNA using the four ribonucleoside triphosphates as substrates. The protein is DNA-directed RNA polymerase subunit alpha of Mesostigma viride (Green alga).